A 37-amino-acid polypeptide reads, in one-letter code: Omega/M-ectatotoxin-Et1a subunit A (37 aa).

Cys-12 and Cys-34 are oxidised to a cystine.

The protein belongs to the ectatomin family. Ectatomin-Et subfamily. In terms of assembly, heterodimer of an A and a B chain; disulfide-linked. As to expression, expressed by the venom gland.

It localises to the secreted. The protein localises to the target cell membrane. Its function is as follows. Algogenic for animals, human and insects. At high concentrations (0.5-1 uM), it acts as a pore-forming protein that forms nonselective cation channels both in cell and artificial membranes. It is weakly selective for cation over anions channel conductance is identical in both directions. At lower concentrations (1-10 nM), this heterodimer inhibits cardiac L-type calcium currents in isolated rat cardiac ventricular myocytes. This Ectatomma tuberculatum (Selva ant) protein is Omega/M-ectatotoxin-Et1a subunit A.